Reading from the N-terminus, the 71-residue chain is uncharacterized protein (71 aa).

The Cytoplasmic portion of the chain corresponds to 1–16; sequence MLLLYTVMILTCIIYK. Residues 17-38 traverse the membrane as a helical segment; the sequence is LVPDNKYWPIHMFFFIMIYIVY. Topologically, residues 39 to 69 are extracellular; that stretch reads MYEKLDIHEKSQFWNYTMARLSGHPVPTIIC. A glycan (N-linked (GlcNAc...) asparagine; by host) is linked at Asn-53.

It belongs to the asfivirus X69R family.

It localises to the host membrane. This is an uncharacterized protein from African swine fever virus (isolate Pig/Kenya/KEN-50/1950) (ASFV).